The sequence spans 264 residues: Virulence plasmid protein pGP3-D (264 aa).

The chain is Virulence plasmid protein pGP3-D from Chlamydia psittaci (Chlamydophila psittaci).